The following is a 637-amino-acid chain: MPVSKREQSKDTGDPCALPKLPIPPLKQTLDMYLTCMGHLVPEDQFRKTKAVVEKFGAPGGVGETLQKKLLERSEQKANWVYDYWLEDMYLNNRLALPVNSSPVMVFHKQNFKGQSDVLRFAANLISGVLEYKALIDGRALPVEHARGQLAGTPLCMDQYNKVFTSYRLPGTKTDTLVAQKSTVMPEPEHIIVACKNQFFVLDVMVNFRRLNEKDLYTQLERIRKMADIEEERQPPIGLLTSDGRTQWAEARNILIKDSTNRDSLDMIERCLCLVCLDEETATELNDSNRALLMLHGGGTDKNGGNRWYDKPMQFVIGADGCCGVVCEHSPFEGIVLVQCSEYLLRYMRGSPSKLVRAASMSELPAPRRLRWKCSPDIQTFLSASADRLQKLVKNLDMNVHKFTGYGKEFIKRQKMSPDAYVQVALQFTFYRCHGRLVPTYESASIRRFQEGRVDNIRSSTPEALAFVKAMASGSKITDAEKMELLWTAIKAQTNYTILAITGMAIDNHLLGLREIAKELKLEKPELFSDTTYATSIHFTLSTSQVPTTEEMFCCYGPVVPNGYGACYNPQTDHILFCVSSFRECAETSSDLFVKTLEGCLKEMQDLCRKCNTEVKPADSTQRMEGNPKVMKNGSKS.

Over residues 1-13 (MPVSKREQSKDTG) the composition is skewed to basic and acidic residues. The disordered stretch occupies residues 1–20 (MPVSKREQSKDTGDPCALPK). H329 serves as the catalytic Proton acceptor. Residues 407 to 419 (GKEFIKRQKMSPD), S445, and Q545 each bind CoA.

Belongs to the carnitine/choline acetyltransferase family.

It carries out the reaction choline + acetyl-CoA = acetylcholine + CoA. In terms of biological role, catalyzes the reversible synthesis of acetylcholine (ACh) from acetyl CoA and choline at cholinergic synapses. This chain is Choline O-acetyltransferase (chat), found in Danio rerio (Zebrafish).